Here is a 105-residue protein sequence, read N- to C-terminus: Large ribosomal subunit protein bL21 (105 aa).

Belongs to the bacterial ribosomal protein bL21 family. As to quaternary structure, part of the 50S ribosomal subunit. Contacts protein L20.

This protein binds to 23S rRNA in the presence of protein L20. This Porphyromonas gingivalis (strain ATCC BAA-308 / W83) protein is Large ribosomal subunit protein bL21.